Here is a 228-residue protein sequence, read N- to C-terminus: MQKLKQQVFEANMDLPRYGLVTFTWGNVSAIDRERGLVVIKPSGVAYETMKADDMVVVDMSGKVVEGEYRPSSDTATHLELYRRYPSLGGIVHTHSTHATAWAQAGLAIPALGTTHADYFFGDIPCTRGLSEEEVQGEYELNTGKVIIETLGNAEPLHTPGIVVYQHGPFAWGKDAHDAVHNAVVMEEVAKMAWIARSINPQLNHIDSFLMNEHFMRKHGPNAYYGQK.

Residues 26–27 (GN), 43–44 (SG), and 72–73 (SS) contribute to the substrate site. Zn(2+) contacts are provided by aspartate 74, histidine 93, and histidine 95. Residue aspartate 118 is the Proton donor/acceptor of the active site. Histidine 167 lines the Zn(2+) pocket. Residue tyrosine 225 is the Proton donor/acceptor of the active site.

This sequence belongs to the aldolase class II family. AraD/FucA subfamily. The cofactor is Zn(2+).

The enzyme catalyses L-ribulose 5-phosphate = D-xylulose 5-phosphate. Its pathway is cofactor degradation; L-ascorbate degradation; D-xylulose 5-phosphate from L-ascorbate: step 4/4. Its function is as follows. Catalyzes the isomerization of L-ribulose 5-phosphate to D-xylulose 5-phosphate. Is involved in the anaerobic L-ascorbate utilization. This chain is L-ribulose-5-phosphate 4-epimerase UlaF, found in Shigella dysenteriae serotype 1 (strain Sd197).